The following is a 349-amino-acid chain: UPF0324 inner membrane protein YeiH (349 aa).

Residues 1–12 (MTNITLQKQHRT) lie on the Periplasmic side of the membrane. The helical transmembrane segment at 13-32 (LWHFIPGLALSAVITGVALW) threads the bilayer. At 33-35 (GGS) the chain is on the cytoplasmic side. The chain crosses the membrane as a helical span at residues 36–58 (IPAVAGAGFSALTLAILLGMVLG). The Periplasmic portion of the chain corresponds to 59-99 (NTIYPHIWKSCDGGVLFAKQYLLRLGIILYGFRLTFSQIAD). A helical membrane pass occupies residues 100 to 122 (VGISGIIIDVLTLSSTFLLACFL). At 123–131 (GQKVFGLDK) the chain is on the cytoplasmic side. The helical transmembrane segment at 132-151 (HTSWLIGAGSSICGAAAVLA) threads the bilayer. The Periplasmic segment spans residues 152 to 162 (TEPVVKAEASK). Residues 163-185 (VTVAVATVVIFGTVAIFLYPAIY) form a helical membrane-spanning segment. Over 186-261 (PLMSQWFSPE…SGTNSGEKSK (76 aa)) the chain is Cytoplasmic. A helical membrane pass occupies residues 262 to 283 (ITIPWFAILFIVVAIFNSFHLL). Residues 284-289 (PQSVVN) lie on the Periplasmic side of the membrane. The helical transmembrane segment at 290-312 (MLVTLDTFLLAMAMAALGLTTHV) threads the bilayer. Residues 313–321 (SALKKAGAK) lie on the Cytoplasmic side of the membrane. A helical transmembrane segment spans residues 322-344 (PLLMALVLFAWLIVGGGAINYVI). Residues 345–349 (QSVIA) lie on the Periplasmic side of the membrane.

Belongs to the UPF0324 family.

It localises to the cell inner membrane. The protein is UPF0324 inner membrane protein YeiH (yeiH) of Escherichia coli O6:H1 (strain CFT073 / ATCC 700928 / UPEC).